A 318-amino-acid polypeptide reads, in one-letter code: Protoheme IX farnesyltransferase (318 aa).

9 consecutive transmembrane segments (helical) span residues 37-57 (VMELLLVTTLPTMIFAARGLP), 59-79 (IWLILATMIGGAFAAGSAGAF), 108-128 (EALVFSWALGILSIAILWFGA), 131-151 (LAGLLGIAAIFFYVVVYTLIL), 158-178 (NIVWGGVAGCMPVLIAWAAVT), 183-203 (WPAIILFMVIFLWTPPHYWPL), 216-238 (VPMLGAVAGARIVSVQVVLYTWA), 249-269 (LGHACIVYTVVAGAAGLWFLL), and 296-316 (ISYLTLLFVALAVDPFVGMPL).

It belongs to the UbiA prenyltransferase family. Protoheme IX farnesyltransferase subfamily.

It localises to the cell membrane. The catalysed reaction is heme b + (2E,6E)-farnesyl diphosphate + H2O = Fe(II)-heme o + diphosphate. The protein operates within porphyrin-containing compound metabolism; heme O biosynthesis; heme O from protoheme: step 1/1. Converts heme B (protoheme IX) to heme O by substitution of the vinyl group on carbon 2 of heme B porphyrin ring with a hydroxyethyl farnesyl side group. The chain is Protoheme IX farnesyltransferase from Renibacterium salmoninarum (strain ATCC 33209 / DSM 20767 / JCM 11484 / NBRC 15589 / NCIMB 2235).